The primary structure comprises 660 residues: E3 ubiquitin-protein ligase ORTHRUS 3 (660 aa).

The PHD-type zinc finger occupies 12-63; the sequence is EGVCMRCKSMPPPEESLTCGTCVTPWHVSCLLSPPETLSATLQWLCPDCSGE. A disordered region spans residues 107 to 129; the sequence is QLLSGKGVVDEDDEEEKKKTSKG. The segment at 141-197 adopts an RING-type 1 zinc-finger fold; that stretch reads CSFCMQSLQKPVSVRVLFALALMLVWFLESTPCGHNACLKCFLKWMGQGHRSCGTCR. One can recognise a YDG domain in the interval 285 to 434; the sequence is VRNQGLLVGE…CRFLFVRCDN (150 aa). The RING-type 2 zinc finger occupies 528–585; sequence CQICQKVMTNPVTTPCAHNFCKACLESKFAGTALVRERGSGGRKLRSQKSVMKCPCCP. The stretch at 593–622 forms a coiled coil; it reads QNPQVNREVAEVIEKLKKQEEEENAKSLDE. 2 stretches are compositionally biased toward basic and acidic residues: residues 610-621 and 637-646; these read KQEEEENAKSLD and QPKKRIKLDT. The disordered stretch occupies residues 610 to 660; sequence KQEEEENAKSLDEGQCSGTSHEEEDDEQPKKRIKLDTDAEVSATVVESDMK.

The protein resides in the nucleus. The enzyme catalyses S-ubiquitinyl-[E2 ubiquitin-conjugating enzyme]-L-cysteine + [acceptor protein]-L-lysine = [E2 ubiquitin-conjugating enzyme]-L-cysteine + N(6)-ubiquitinyl-[acceptor protein]-L-lysine.. It participates in protein modification; protein ubiquitination. Functionally, E3 ubiquitin-protein ligase. May participate in CpG methylation-dependent transcriptional regulation. This chain is E3 ubiquitin-protein ligase ORTHRUS 3 (ORTH3), found in Arabidopsis thaliana (Mouse-ear cress).